Consider the following 436-residue polypeptide: Elongation factor 1-gamma-A (436 aa).

The GST N-terminal domain maps to 2–87 (AGGTLYTYPD…YVGNDELRGT (86 aa)). One can recognise a GST C-terminal domain in the interval 88–221 (TRLHQAQVIQ…KMAQFDAKKF (134 aa)). Basic and acidic residues-rich tracts occupy residues 221–249 (FAEM…EKKK) and 265–278 (SEKA…SKDP). The segment at 221-278 (FAEMQPKKETPKKEKPAKEPKKEKEEKKKAAPTPAPAPEDDLDESEKALAAEPKSKDP) is disordered. The EF-1-gamma C-terminal domain maps to 275 to 436 (SKDPYAHLPK…KPFNQGKIFK (162 aa)).

As to quaternary structure, EF-1 is composed of four subunits: alpha, beta, delta, and gamma. Phosphorylated by CDK1. In terms of processing, the N-terminus is blocked.

Its function is as follows. Probably plays a role in anchoring the complex to other cellular components. This Xenopus laevis (African clawed frog) protein is Elongation factor 1-gamma-A (eef1g-a).